We begin with the raw amino-acid sequence, 362 residues long: RNA-binding protein 4 (362 aa).

2 RRM domains span residues 2-72 (VKLF…ASKN) and 78-148 (TKLH…LSTS). A Glycyl lysine isopeptide (Lys-Gly) (interchain with G-Cter in SUMO2) cross-link involves residue lysine 79. Serine 86 is modified (phosphoserine). A Glycyl lysine isopeptide (Lys-Gly) (interchain with G-Cter in SUMO2) cross-link involves residue lysine 92. A CCHC-type zinc finger spans residues 160–177 (SGCYRCGKEGHWSKECPV). An interaction with TNPO3 region spans residues 196–362 (AVRTPYTMGY…YADRARYSAF (167 aa)). The tract at residues 306–336 (RSPLRRATGPVPTVGEGYGYGHESELSQGSS) is disordered. Serine 307 bears the Phosphoserine mark.

Interacts with TNPO3; the interaction mediates nuclear import of the protein and is disrupted by nuclear Ran bound to GTP. Interacts with EIF4G1 and WT1. Interacts with EIF4A1; the interaction is modulated under stress-induced conditions. Interacts with AGO1. Interacts with AGO2; the interaction occurs under both cell proliferation and differentiation conditions and in an RNA- and phosphorylation-independent manner. Interacts with DDX5; the interaction occurs in an RNA-independent manner. Interacts with RBPMS; the interaction allows cooperative assembly of RNA-bound stable cell-specific alternative splicing regulatory complexes. Post-translationally, phosphorylated. Phosphorylated in vitro on Ser-307 by SRPK1. Phosphorylation on Ser-307 is induced upon cell stress signaling, which alters its subcellular localization and may modulate its activity on IRES-mediated mRNA translation. Phosphorylation on Ser-307 is induced upon cell muscle differentiation.

The protein resides in the nucleus. The protein localises to the nucleolus. Its subcellular location is the nucleus speckle. It localises to the cytoplasm. It is found in the cytoplasmic granule. RNA-binding factor involved in multiple aspects of cellular processes like alternative splicing of pre-mRNA and translation regulation. Modulates alternative 5'-splice site and exon selection. Acts as a muscle cell differentiation-promoting factor. Activates exon skipping of the PTB pre-mRNA during muscle cell differentiation. Antagonizes the activity of the splicing factor PTBP1 to modulate muscle cell-specific exon selection of alpha tropomyosin. Binds to intronic pyrimidine-rich sequence of the TPM1 and MAPT pre-mRNAs. Required for the translational activation of PER1 mRNA in response to circadian clock. Binds directly to the 3'-UTR of the PER1 mRNA. Exerts a suppressive activity on Cap-dependent translation via binding to CU-rich responsive elements within the 3'UTR of mRNAs, a process increased under stress conditions or during myocytes differentiation. Recruits EIF4A1 to stimulate IRES-dependent translation initiation in respons to cellular stress. Associates to internal ribosome entry segment (IRES) in target mRNA species under stress conditions. Plays a role for miRNA-guided RNA cleavage and translation suppression by promoting association of AGO2-containing miRNPs with their cognate target mRNAs. Associates with miRNAs during muscle cell differentiation. Binds preferentially to 5'-CGCGCG[GCA]-3' motif in vitro. The protein is RNA-binding protein 4 (RBM4) of Bos taurus (Bovine).